The primary structure comprises 70 residues: ATP synthase subunit epsilon, mitochondrial (70 aa).

This sequence belongs to the eukaryotic ATPase epsilon family. F-type ATPases have 2 components, CF(1) - the catalytic core - and CF(0) - the membrane proton channel. CF(1) has five subunits: alpha(3), beta(3), gamma(1), delta(1), epsilon(1). CF(0) has three main subunits: a, b and c.

Its subcellular location is the mitochondrion. It localises to the mitochondrion inner membrane. Its function is as follows. Mitochondrial membrane ATP synthase (F(1)F(0) ATP synthase or Complex V) produces ATP from ADP in the presence of a proton gradient across the membrane which is generated by electron transport complexes of the respiratory chain. F-type ATPases consist of two structural domains, F(1) - containing the extramembraneous catalytic core, and F(0) - containing the membrane proton channel, linked together by a central stalk and a peripheral stalk. During catalysis, ATP synthesis in the catalytic domain of F(1) is coupled via a rotary mechanism of the central stalk subunits to proton translocation. Part of the complex F(1) domain and of the central stalk which is part of the complex rotary element. Rotation of the central stalk against the surrounding alpha(3)beta(3) subunits leads to hydrolysis of ATP in three separate catalytic sites on the beta subunits. In Ipomoea batatas (Sweet potato), this protein is ATP synthase subunit epsilon, mitochondrial.